A 471-amino-acid polypeptide reads, in one-letter code: Metalloprotease TIKI homolog (471 aa).

The N-terminal stretch at 1-24 (MAAFTLWILVLNVFLLGFQARKLA) is a signal peptide. Residues 25–449 (SNLKFPIQKC…SRKAAASCTP (425 aa)) lie on the Extracellular side of the membrane. Residues asparagine 226, asparagine 235, asparagine 284, and asparagine 342 are each glycosylated (N-linked (GlcNAc...) asparagine). Positions 369–402 (KAKKSLNTRRERRKGCRGRRKKSKRCQKKKKRKR) are enriched in basic residues. Residues 369–406 (KAKKSLNTRRERRKGCRGRRKKSKRCQKKKKRKRPDYS) are disordered. The helical transmembrane segment at 450–470 (IWTVSLALTCAVTCLLTYSGF) threads the bilayer. A topological domain (cytoplasmic) is located at residue arginine 471.

Belongs to the TIKI family. It depends on Mn(2+) as a cofactor. Requires Co(2+) as cofactor.

Its subcellular location is the membrane. Functionally, metalloprotease. This chain is Metalloprotease TIKI homolog, found in Nematostella vectensis (Starlet sea anemone).